The following is a 419-amino-acid chain: Histidine--tRNA ligase (419 aa).

This sequence belongs to the class-II aminoacyl-tRNA synthetase family. In terms of assembly, homodimer.

It is found in the cytoplasm. It catalyses the reaction tRNA(His) + L-histidine + ATP = L-histidyl-tRNA(His) + AMP + diphosphate + H(+). The polypeptide is Histidine--tRNA ligase (Synechococcus sp. (strain JA-3-3Ab) (Cyanobacteria bacterium Yellowstone A-Prime)).